Reading from the N-terminus, the 276-residue chain is Undecaprenyl-diphosphatase 1 (276 aa).

A run of 7 helical transmembrane segments spans residues 4–24, 46–63, 83–103, 108–128, 187–207, 217–237, and 252–272; these read ILICKALILGVVEGLTEFLPV, TFDVVIQFGAILAVCWEY, FTLNVVIATIPAIALGLLFEK, VLFSPVPVAFALVVGGAIILW, VATEFSFFLAIPIIFGATLYE, VDSLGLFVLGAVAAFVSAFVC, and VFAWYRIAFGLFVLLVGYSGW.

Belongs to the UppP family.

The protein localises to the cell inner membrane. It carries out the reaction di-trans,octa-cis-undecaprenyl diphosphate + H2O = di-trans,octa-cis-undecaprenyl phosphate + phosphate + H(+). In terms of biological role, catalyzes the dephosphorylation of undecaprenyl diphosphate (UPP). Confers resistance to bacitracin. This is Undecaprenyl-diphosphatase 1 from Burkholderia lata (strain ATCC 17760 / DSM 23089 / LMG 22485 / NCIMB 9086 / R18194 / 383).